Reading from the N-terminus, the 310-residue chain is Ribose-phosphate pyrophosphokinase (310 aa).

ATP-binding positions include 34–36 (DQE) and 93–94 (RQ). His-127 and Asp-167 together coordinate Mg(2+). Lys-190 is a catalytic residue. D-ribose 5-phosphate is bound by residues Arg-192, Asp-216, and 220 to 224 (DSGGT).

The protein belongs to the ribose-phosphate pyrophosphokinase family. Class I subfamily. In terms of assembly, homohexamer. Mg(2+) serves as cofactor.

It is found in the cytoplasm. It catalyses the reaction D-ribose 5-phosphate + ATP = 5-phospho-alpha-D-ribose 1-diphosphate + AMP + H(+). The protein operates within metabolic intermediate biosynthesis; 5-phospho-alpha-D-ribose 1-diphosphate biosynthesis; 5-phospho-alpha-D-ribose 1-diphosphate from D-ribose 5-phosphate (route I): step 1/1. Its function is as follows. Involved in the biosynthesis of the central metabolite phospho-alpha-D-ribosyl-1-pyrophosphate (PRPP) via the transfer of pyrophosphoryl group from ATP to 1-hydroxyl of ribose-5-phosphate (Rib-5-P). The polypeptide is Ribose-phosphate pyrophosphokinase (Rhizobium meliloti (strain 1021) (Ensifer meliloti)).